We begin with the raw amino-acid sequence, 286 residues long: Bifunctional protein FolD (286 aa).

Residues 160–162 (GRS), S189, and T230 each bind NADP(+).

The protein belongs to the tetrahydrofolate dehydrogenase/cyclohydrolase family. As to quaternary structure, homodimer.

It catalyses the reaction (6R)-5,10-methylene-5,6,7,8-tetrahydrofolate + NADP(+) = (6R)-5,10-methenyltetrahydrofolate + NADPH. The catalysed reaction is (6R)-5,10-methenyltetrahydrofolate + H2O = (6R)-10-formyltetrahydrofolate + H(+). Its pathway is one-carbon metabolism; tetrahydrofolate interconversion. Functionally, catalyzes the oxidation of 5,10-methylenetetrahydrofolate to 5,10-methenyltetrahydrofolate and then the hydrolysis of 5,10-methenyltetrahydrofolate to 10-formyltetrahydrofolate. This Chlamydia pneumoniae (Chlamydophila pneumoniae) protein is Bifunctional protein FolD.